A 454-amino-acid chain; its full sequence is Diaminobutyrate--2-oxoglutarate aminotransferase (454 aa).

An N6-(pyridoxal phosphate)lysine modification is found at Lys287.

This sequence belongs to the class-III pyridoxal-phosphate-dependent aminotransferase family. Requires pyridoxal 5'-phosphate as cofactor.

The enzyme catalyses L-2,4-diaminobutanoate + 2-oxoglutarate = L-aspartate 4-semialdehyde + L-glutamate. The protein operates within amine and polyamine biosynthesis; 1,3-diaminopropane biosynthesis; 1,3-diaminopropane from L-aspartate 4-semialdehyde: step 1/2. In Haemophilus influenzae (strain ATCC 51907 / DSM 11121 / KW20 / Rd), this protein is Diaminobutyrate--2-oxoglutarate aminotransferase (dat).